The following is a 64-amino-acid chain: Large ribosomal subunit protein bL33 (64 aa).

The span at 16–25 shows a compositional bias: basic and acidic residues; that stretch reads EARTSSEPRR. The tract at residues 16–41 is disordered; the sequence is EARTSSEPRRSNGVSRYTTEKNKRNT.

It belongs to the bacterial ribosomal protein bL33 family.

This Prochlorococcus marinus subsp. pastoris (strain CCMP1986 / NIES-2087 / MED4) protein is Large ribosomal subunit protein bL33.